A 498-amino-acid chain; its full sequence is ATP synthase subunit beta, chloroplastic (498 aa).

Position 172-179 (172-179 (GGAGVGKT)) interacts with ATP.

This sequence belongs to the ATPase alpha/beta chains family. As to quaternary structure, F-type ATPases have 2 components, CF(1) - the catalytic core - and CF(0) - the membrane proton channel. CF(1) has five subunits: alpha(3), beta(3), gamma(1), delta(1), epsilon(1). CF(0) has four main subunits: a(1), b(1), b'(1) and c(9-12).

The protein resides in the plastid. It is found in the chloroplast thylakoid membrane. The catalysed reaction is ATP + H2O + 4 H(+)(in) = ADP + phosphate + 5 H(+)(out). Its function is as follows. Produces ATP from ADP in the presence of a proton gradient across the membrane. The catalytic sites are hosted primarily by the beta subunits. This is ATP synthase subunit beta, chloroplastic from Trochodendron aralioides (Wheel tree).